A 109-amino-acid polypeptide reads, in one-letter code: Tyrosine-protein phosphatase 6 (109 aa).

One can recognise a Tyrosine-protein phosphatase domain in the interval 1–109; sequence YNINVIVMVC…SEDETTPLCV (109 aa). Asp-76 lines the substrate pocket.

This sequence belongs to the protein-tyrosine phosphatase family.

The enzyme catalyses O-phospho-L-tyrosyl-[protein] + H2O = L-tyrosyl-[protein] + phosphate. The sequence is that of Tyrosine-protein phosphatase 6 (STY-6) from Styela plicata (Wrinkled sea squirt).